Here is a 655-residue protein sequence, read N- to C-terminus: Protein-glucosylgalactosylhydroxylysine glucosidase (655 aa).

258-259 is a binding site for substrate; sequence WD. E388 functions as the Proton donor in the catalytic mechanism. 456 to 457 is a binding site for substrate; sequence KQ.

The protein belongs to the glycosyl hydrolase 65 family.

The enzyme catalyses (5R)-5-O-[alpha-D-glucosyl-(1-&gt;2)-beta-D-galactosyl]-5-hydroxy-L-lysyl-[collagen] + H2O = (5R)-5-O-(beta-D-galactosyl)-5-hydroxy-L-lysyl-[collagen] + D-glucose. In terms of biological role, catalyzes the hydrolysis of glucose from the disaccharide unit linked to hydroxylysine residues of collagen and collagen-like proteins. The polypeptide is Protein-glucosylgalactosylhydroxylysine glucosidase (Danio rerio (Zebrafish)).